Here is a 143-residue protein sequence, read N- to C-terminus: Aspartate 1-decarboxylase (143 aa).

S25 (schiff-base intermediate with substrate; via pyruvic acid) is an active-site residue. S25 is modified (pyruvic acid (Ser)). T57 serves as a coordination point for substrate. The active-site Proton donor is the Y58. 73 to 75 (GAA) lines the substrate pocket.

The protein belongs to the PanD family. In terms of assembly, heterooctamer of four alpha and four beta subunits. The cofactor is pyruvate. Post-translationally, is synthesized initially as an inactive proenzyme, which is activated by self-cleavage at a specific serine bond to produce a beta-subunit with a hydroxyl group at its C-terminus and an alpha-subunit with a pyruvoyl group at its N-terminus.

The protein localises to the cytoplasm. It carries out the reaction L-aspartate + H(+) = beta-alanine + CO2. Its pathway is cofactor biosynthesis; (R)-pantothenate biosynthesis; beta-alanine from L-aspartate: step 1/1. In terms of biological role, catalyzes the pyruvoyl-dependent decarboxylation of aspartate to produce beta-alanine. This Mycolicibacterium paratuberculosis (strain ATCC BAA-968 / K-10) (Mycobacterium paratuberculosis) protein is Aspartate 1-decarboxylase.